A 677-amino-acid chain; its full sequence is Opioid growth factor receptor (677 aa).

Met-1 bears the N-acetylmethionine mark. Over residues 1–29 the composition is skewed to acidic residues; it reads MDDPDCDSTWEEDEEDAEDAEDEDCEDGE. A disordered region spans residues 1 to 63; sequence MDDPDCDSTW…SSFQSRMTGS (63 aa). Over residues 54–63 the composition is skewed to polar residues; that stretch reads SSFQSRMTGS. Residues 267–283 carry the Bipartite nuclear localization signal motif; that stretch reads RRQLVHFAWEHFRPRCK. A disordered region spans residues 295–407; sequence FKPSSLPHPL…EPGPQSASEV (113 aa). Phosphoserine occurs at positions 299 and 315. Basic and acidic residues-rich tracts occupy residues 305 to 323 and 331 to 345; these read EGSRKVEEEGSPGDPDHEA and GPEHSKGGGRVDEGP. Phosphoserine is present on residues Ser-349, Ser-361, Ser-378, Ser-382, Ser-403, and Ser-420. Basic and acidic residues predominate over residues 361–395; sequence SQGDEAGGHGEDRPEPLSPKESKKRKLELSRREQP. A compositionally biased stretch (polar residues) spans 421-431; it reads QGSLRTGTQEV. Positions 421–677 are disordered; the sequence is QGSLRTGTQE…VESSAKSGKP (257 aa). Residues 466-476 are compositionally biased toward low complexity; that stretch reads GDSAAVASGGA. Ser-484 carries the post-translational modification Phosphoserine. A run of 7 repeats spans residues 517-536, 537-556, 557-576, 577-596, 597-616, 617-636, and 637-656. The 7 X 20 AA approximate tandem repeats of [ST]-P-S-E-T-P-G-P-[SR]-P-A-G-P-[AT]-[GR]-D-E-P-A-[EK] stretch occupies residues 517-656; sequence SPSETPGPSP…AGPTRDEPAK (140 aa). Low complexity predominate over residues 528–538; that stretch reads GPAGDEPAESP. Residues Ser-537 and Ser-557 each carry the phosphoserine modification. A phosphoserine mark is found at Ser-617 and Ser-637.

It belongs to the opioid growth factor receptor family. As to expression, highly expressed in the heart and liver, moderately in skeletal muscle and kidney and to a lesser extent in brain and pancreas. Expressed in fetal tissues including liver and kidney.

Its subcellular location is the cytoplasm. The protein resides in the nucleus. Functionally, receptor for opioid growth factor (OGF), also known as Met-enkephalin. Seems to be involved in growth regulation. In Homo sapiens (Human), this protein is Opioid growth factor receptor (OGFR).